The sequence spans 168 residues: Crossover junction endodeoxyribonuclease RuvC (168 aa).

Residues Asp10, Glu70, and Asp143 contribute to the active site. Mg(2+) contacts are provided by Asp10, Glu70, and Asp143.

The protein belongs to the RuvC family. In terms of assembly, homodimer which binds Holliday junction (HJ) DNA. The HJ becomes 2-fold symmetrical on binding to RuvC with unstacked arms; it has a different conformation from HJ DNA in complex with RuvA. In the full resolvosome a probable DNA-RuvA(4)-RuvB(12)-RuvC(2) complex forms which resolves the HJ. The cofactor is Mg(2+).

It is found in the cytoplasm. The catalysed reaction is Endonucleolytic cleavage at a junction such as a reciprocal single-stranded crossover between two homologous DNA duplexes (Holliday junction).. Functionally, the RuvA-RuvB-RuvC complex processes Holliday junction (HJ) DNA during genetic recombination and DNA repair. Endonuclease that resolves HJ intermediates. Cleaves cruciform DNA by making single-stranded nicks across the HJ at symmetrical positions within the homologous arms, yielding a 5'-phosphate and a 3'-hydroxyl group; requires a central core of homology in the junction. The consensus cleavage sequence is 5'-(A/T)TT(C/G)-3'. Cleavage occurs on the 3'-side of the TT dinucleotide at the point of strand exchange. HJ branch migration catalyzed by RuvA-RuvB allows RuvC to scan DNA until it finds its consensus sequence, where it cleaves and resolves the cruciform DNA. This chain is Crossover junction endodeoxyribonuclease RuvC, found in Thermotoga maritima (strain ATCC 43589 / DSM 3109 / JCM 10099 / NBRC 100826 / MSB8).